The following is a 169-amino-acid chain: Disulfide bond formation protein B (169 aa).

The Cytoplasmic segment spans residues 1–14 (MNNLTLSLHRERRL). The helical transmembrane segment at 15 to 31 (LVLLGLVCLALLAGALY) threads the bilayer. At 32-49 (LQYVKNEDPCPLCIIQRY) the chain is on the periplasmic side. Cys41 and Cys44 are joined by a disulfide. A helical transmembrane segment spans residues 50–64 (FFVLIAVFAFIGAGM). The Cytoplasmic segment spans residues 65–71 (ASGAGIA). Residues 72 to 89 (VIEALIVLSAAAGVGTAA) form a helical membrane-spanning segment. The Periplasmic segment spans residues 90–144 (RHLYVQLNPGFSCGFDALQPVVDSLPPAHWLPGVFKVAGLCETVYPPIFGILLPG). Residues Cys102 and Cys130 are joined by a disulfide bond. The chain crosses the membrane as a helical span at residues 145–163 (WALIAFALIVVPVAASLLR). Topologically, residues 164 to 169 (HRGRLR) are cytoplasmic.

Belongs to the DsbB family.

It is found in the cell inner membrane. In terms of biological role, required for disulfide bond formation in some periplasmic proteins. Acts by oxidizing the DsbA protein. The sequence is that of Disulfide bond formation protein B from Burkholderia thailandensis (strain ATCC 700388 / DSM 13276 / CCUG 48851 / CIP 106301 / E264).